The chain runs to 110 residues: Large ribosomal subunit protein uL22 (110 aa).

This sequence belongs to the universal ribosomal protein uL22 family. In terms of assembly, part of the 50S ribosomal subunit.

In terms of biological role, this protein binds specifically to 23S rRNA; its binding is stimulated by other ribosomal proteins, e.g. L4, L17, and L20. It is important during the early stages of 50S assembly. It makes multiple contacts with different domains of the 23S rRNA in the assembled 50S subunit and ribosome. Its function is as follows. The globular domain of the protein is located near the polypeptide exit tunnel on the outside of the subunit, while an extended beta-hairpin is found that lines the wall of the exit tunnel in the center of the 70S ribosome. In Acidovorax ebreus (strain TPSY) (Diaphorobacter sp. (strain TPSY)), this protein is Large ribosomal subunit protein uL22.